Consider the following 366-residue polypeptide: Sperm equatorial segment protein 1 (366 aa).

A signal peptide spans M1–P18. N-linked (GlcNAc...) asparagine glycosylation is present at N129. Residues P139–N204 form a disordered region. The span at D144–E157 shows a compositional bias: acidic residues. Positions A165–G189 are enriched in polar residues.

Belongs to the SPESP1 family. Glycosylated. In testis there are two predominant forms of 77- and 67-kDa and a form of 47-kDa, whereas in epididymal sperm from caput, corpus, and cauda there are two forms of 47- and 43-kDa. Testis forms contain complex carbohydrate residues. Epididymal sperm forms are N-glycosylated. Then undergoes significant glycosylation in the testis and that the majority of these glycoconjugates are removed by the time sperm reach the caput epididymis.

The protein resides in the cytoplasmic vesicle. It localises to the secretory vesicle. The protein localises to the acrosome. Involved in fertilization ability of sperm. This is Sperm equatorial segment protein 1 from Bos taurus (Bovine).